The following is a 511-amino-acid chain: Potassium voltage-gated channel subfamily A member 10 (511 aa).

Residues 22 to 50 (IQEEPGYATDFDSTSPKGRPGGSSFSNGK) form a disordered region. A helical membrane pass occupies residues 218–238 (VAVVSVLVVVISITIFCLETL). A glycan (N-linked (GlcNAc...) asparagine) is linked at asparagine 256. Residues 271 to 292 (FFMVESTCIVWFTFELVLRFVV) form a helical membrane-spanning segment. A lipid anchor (S-palmitoyl cysteine) is attached at cysteine 293. A helical transmembrane segment spans residues 303 to 323 (IMNIIDIISIIPYFATLITEL). A glycan (N-linked (GlcNAc...) asparagine) is linked at asparagine 334. Residues 339 to 358 (ILRIIRLVRVFRIFKLSRHS) form a helical; Voltage-sensor membrane-spanning segment. The chain crosses the membrane as a helical span at residues 375–395 (LGLLIFFLFIGVILFSSAVYF). The Selectivity filter motif lies at 421–426 (TVGYGD). Residues 436-456 (IVGTLCAIAGVLTIALPVPVI) form a helical membrane-spanning segment. The tract at residues 489 to 511 (SRMGSTDSLNKTNGGCSTEKSRK) is disordered. N-linked (GlcNAc...) asparagine glycosylation occurs at asparagine 498.

The protein belongs to the potassium channel family. A (Shaker) (TC 1.A.1.2) subfamily. Kv1.8/KCNA10 sub-subfamily. As to quaternary structure, homotetramer. Interacts with KCN4B/POMP. Interaction with KCN4B/POMP is necessary for the modulation of channel activity by cAMP. In terms of tissue distribution, detected in kidney, in proximal tubules, glomerular endothelium, in vascular endothelium and in smooth muscle cells.

The protein localises to the membrane. It catalyses the reaction K(+)(in) = K(+)(out). The channel activity is up-regulated by cAMP. Its function is as follows. Voltage-gated potassium ion channel that mediates K(+) permeability of excitable membranes. When opened in response to the voltage difference across the membrane, KCNA10 channel selectively allows the flow of potassium ions across the membrane down their electrochemical gradient. This is Potassium voltage-gated channel subfamily A member 10 from Homo sapiens (Human).